A 1226-amino-acid chain; its full sequence is Polyamine-transporting ATPase 13A3 (1226 aa).

The Cytoplasmic segment spans residues 1-28 (MDKEERKIINQGQEDEMEIYGYNLSRWK). An intramembrane segment occupies 29-49 (LAIVSLGVICTGGFLLLLLYW). At 50 to 205 (MPEWRVKATC…IAVKVPSVFK (156 aa)) the chain is on the cytoplasmic side. Ser-98 carries the phosphoserine modification. Residues 206–226 (LLIKEVLNPFYIFQLFSVILW) traverse the membrane as a helical segment. Residues 227–232 (STDEYY) are Lumenal-facing. A helical membrane pass occupies residues 233–253 (YYALAIVVMSIVSIVSSLYSI). At 254 to 409 (RKQYVMLHDM…KPTDFKLYRD (156 aa)) the chain is on the cytoplasmic side. The chain crosses the membrane as a helical span at residues 410–430 (AYLFLLCLVAVAGIGFIYTII). Residues 431–448 (NSILNEVQVGVIIIESLD) lie on the Lumenal side of the membrane. The helical transmembrane segment at 449–469 (IITITVPPALPAAMTAGIVYA) threads the bilayer. Residues 470-940 (QRRLKKIGIF…ALITSFCVFK (471 aa)) lie on the Cytoplasmic side of the membrane. Catalysis depends on Asp-498, which acts as the 4-aspartylphosphate intermediate. 2 residues coordinate Mg(2+): Asp-498 and Thr-500. Residues 498–500 (DKT), Phe-628, Arg-684, and Asp-750 contribute to the ATP site. Ser-817 carries the post-translational modification Phosphoserine. Residue Asp-883 participates in Mg(2+) binding. Residue 883 to 887 (DGAND) participates in ATP binding. The helical transmembrane segment at 941–961 (FMALYSIIQYFSVTLLYSILS) threads the bilayer. Residue Asn-962 is a topological domain, lumenal. Residues 963-983 (LGDFQFLFIDLAIILVVVFTM) traverse the membrane as a helical segment. Residues 984–999 (SLNPAWKELVAQRPPS) are Cytoplasmic-facing. Residues 1000–1020 (GLISGALLFSVLSQIIICIGF) form a helical membrane-spanning segment. Over 1021–1073 (QSLGFFWVKQQPWYEVWHPKSDACNATGSLLWNSSHLDNETELDEHNIQNYEN) the chain is Lumenal. Residues 1074–1094 (TTVFFISSFQYLIVAIAFSKG) form a helical membrane-spanning segment. Topologically, residues 1095-1105 (KPFRQPCYKNY) are cytoplasmic. The chain crosses the membrane as a helical span at residues 1106 to 1126 (FFVFSVIFLYVFILFIMLYPV). Residues 1127 to 1143 (ASVDQVLQIVCVPYQWR) are Lumenal-facing. Residues 1144–1164 (VTMLIIVLVNAFVSITVEESV) traverse the membrane as a helical segment. Residues 1165–1226 (DRWRKCCLPW…NGSCQIITIT (62 aa)) are Cytoplasmic-facing.

It belongs to the cation transport ATPase (P-type) (TC 3.A.3) family. Type V subfamily.

The protein localises to the recycling endosome membrane. It is found in the early endosome membrane. Its subcellular location is the late endosome membrane. It carries out the reaction putrescine(out) + ATP + H2O = putrescine(in) + ADP + phosphate + H(+). Its function is as follows. ATP-driven pump involved in endocytosis-dependent polyamine transport. Uses ATP as an energy source to transfer polyamine precursor putrescine from the endosomal compartment to the cytosol. This Macaca fascicularis (Crab-eating macaque) protein is Polyamine-transporting ATPase 13A3 (ATP13A3).